The following is a 460-amino-acid chain: NADH-ubiquinone oxidoreductase chain 4 (460 aa).

A run of 13 helical transmembrane segments spans residues 20 to 42 (AKWL…LSWL), 61 to 81 (PLST…VLAS), 94 to 113 (RTYI…AFGA), 117 to 139 (IMFY…RWGN), 148 to 168 (TYFL…LLLL), 195 to 215 (LWWA…GVHL), 225 to 245 (PIAG…YGMM), 258 to 278 (LAYP…SICL), 285 to 304 (SLIA…GILI), 308 to 330 (WGFT…LFCL), 351 to 371 (MILP…LALP), 394 to 414 (LLLT…LFLM), and 436 to 456 (LLIT…ELMW).

This sequence belongs to the complex I subunit 4 family.

The protein localises to the mitochondrion membrane. It catalyses the reaction a ubiquinone + NADH + 5 H(+)(in) = a ubiquinol + NAD(+) + 4 H(+)(out). In terms of biological role, core subunit of the mitochondrial membrane respiratory chain NADH dehydrogenase (Complex I) that is believed to belong to the minimal assembly required for catalysis. Complex I functions in the transfer of electrons from NADH to the respiratory chain. The immediate electron acceptor for the enzyme is believed to be ubiquinone. This Salmo salar (Atlantic salmon) protein is NADH-ubiquinone oxidoreductase chain 4 (MT-ND4).